The primary structure comprises 433 residues: Probable M18 family aminopeptidase 2 (433 aa).

The Zn(2+) site is built by histidine 79, histidine 153, and histidine 404.

Belongs to the peptidase M18 family. The cofactor is Zn(2+).

This is Probable M18 family aminopeptidase 2 (apeB) from Mycobacterium bovis (strain ATCC BAA-935 / AF2122/97).